Reading from the N-terminus, the 109-residue chain is MAEMVARLASERAVVVFTKSGCCMCTAVTTLLGELAVSAAVHELDREPLGKEMERELARRLYGSGGRGGPAVPAVFIGGSLVGSTSKVMAMHLKGELVPMLKNAGALWL.

Residues 2-108 (AEMVARLASE…PMLKNAGALW (107 aa)) form the Glutaredoxin domain. Cysteines 22 and 25 form a disulfide. The short motif at 106-109 (ALWL) is the Responsive for interaction with TGA factors element.

Belongs to the glutaredoxin family. CC-type subfamily.

The protein resides in the cytoplasm. It localises to the nucleus. Functionally, has a glutathione-disulfide oxidoreductase activity in the presence of NADPH and glutathione reductase. Reduces low molecular weight disulfides and proteins. The chain is Glutaredoxin-C13 (GRXC13) from Oryza sativa subsp. japonica (Rice).